Consider the following 228-residue polypeptide: ATP-dependent dethiobiotin synthetase BioD (228 aa).

12-17 (EIGKTT) is a binding site for ATP. Mg(2+) is bound at residue threonine 16. Lysine 37 is a catalytic residue. Serine 41 contributes to the substrate binding site. Residues aspartate 54, 116–119 (EGAG), and 205–207 (PRL) each bind ATP. The Mg(2+) site is built by aspartate 54 and glutamate 116.

This sequence belongs to the dethiobiotin synthetase family. In terms of assembly, homodimer. Mg(2+) serves as cofactor.

The protein localises to the cytoplasm. It catalyses the reaction (7R,8S)-7,8-diammoniononanoate + CO2 + ATP = (4R,5S)-dethiobiotin + ADP + phosphate + 3 H(+). It participates in cofactor biosynthesis; biotin biosynthesis; biotin from 7,8-diaminononanoate: step 1/2. Its function is as follows. Catalyzes a mechanistically unusual reaction, the ATP-dependent insertion of CO2 between the N7 and N8 nitrogen atoms of 7,8-diaminopelargonic acid (DAPA, also called 7,8-diammoniononanoate) to form a ureido ring. This chain is ATP-dependent dethiobiotin synthetase BioD, found in Pseudomonas aeruginosa (strain ATCC 15692 / DSM 22644 / CIP 104116 / JCM 14847 / LMG 12228 / 1C / PRS 101 / PAO1).